The following is a 99-amino-acid chain: MALTPTDVSRIALLARLELSEAEQSAMLSQLNGFFDIVERMRAVDTTGVAPLYTPLSAVQEVALRLREDAVTEVDQRQANQLSAPAVEAGLYLVPKVIE.

The protein belongs to the GatC family. Heterotrimer of A, B and C subunits.

The enzyme catalyses L-glutamyl-tRNA(Gln) + L-glutamine + ATP + H2O = L-glutaminyl-tRNA(Gln) + L-glutamate + ADP + phosphate + H(+). It carries out the reaction L-aspartyl-tRNA(Asn) + L-glutamine + ATP + H2O = L-asparaginyl-tRNA(Asn) + L-glutamate + ADP + phosphate + 2 H(+). Allows the formation of correctly charged Asn-tRNA(Asn) or Gln-tRNA(Gln) through the transamidation of misacylated Asp-tRNA(Asn) or Glu-tRNA(Gln) in organisms which lack either or both of asparaginyl-tRNA or glutaminyl-tRNA synthetases. The reaction takes place in the presence of glutamine and ATP through an activated phospho-Asp-tRNA(Asn) or phospho-Glu-tRNA(Gln). This Methylibium petroleiphilum (strain ATCC BAA-1232 / LMG 22953 / PM1) protein is Aspartyl/glutamyl-tRNA(Asn/Gln) amidotransferase subunit C.